A 352-amino-acid chain; its full sequence is UDP-3-O-acylglucosamine N-acyltransferase (352 aa).

The Proton acceptor role is filled by His-246.

This sequence belongs to the transferase hexapeptide repeat family. LpxD subfamily. Homotrimer.

The catalysed reaction is a UDP-3-O-[(3R)-3-hydroxyacyl]-alpha-D-glucosamine + a (3R)-hydroxyacyl-[ACP] = a UDP-2-N,3-O-bis[(3R)-3-hydroxyacyl]-alpha-D-glucosamine + holo-[ACP] + H(+). The protein operates within bacterial outer membrane biogenesis; LPS lipid A biosynthesis. In terms of biological role, catalyzes the N-acylation of UDP-3-O-acylglucosamine using 3-hydroxyacyl-ACP as the acyl donor. Is involved in the biosynthesis of lipid A, a phosphorylated glycolipid that anchors the lipopolysaccharide to the outer membrane of the cell. The chain is UDP-3-O-acylglucosamine N-acyltransferase from Chlorobium luteolum (strain DSM 273 / BCRC 81028 / 2530) (Pelodictyon luteolum).